We begin with the raw amino-acid sequence, 258 residues long: MTQHSRDTPQFYLTAPSPCPYLPGRQERKVFTHLVGDKATDLNDLLTHGGFRRSQSIAYRPACDQCRACVSVRVIANEFRPSRNFRKVLARNSDLVGEQRSAVPTSEQYSIFRSYLDQRHRHGGMADMTVLDYAMMVEDSHVETRIIEYRRRNLSNGPNARGGELIAVALTDVLSDGLSMVYSFFDPSETTRSLGTFMILDHIARARRQGLPYVYLGYWIEGSKKMDYKSRYLPQQRLAAAGWLRVDDEGHTAPEPQE.

It belongs to the R-transferase family. Bpt subfamily.

The protein localises to the cytoplasm. The catalysed reaction is N-terminal L-glutamyl-[protein] + L-leucyl-tRNA(Leu) = N-terminal L-leucyl-L-glutamyl-[protein] + tRNA(Leu) + H(+). The enzyme catalyses N-terminal L-aspartyl-[protein] + L-leucyl-tRNA(Leu) = N-terminal L-leucyl-L-aspartyl-[protein] + tRNA(Leu) + H(+). In terms of biological role, functions in the N-end rule pathway of protein degradation where it conjugates Leu from its aminoacyl-tRNA to the N-termini of proteins containing an N-terminal aspartate or glutamate. The protein is Aspartate/glutamate leucyltransferase of Bradyrhizobium sp. (strain BTAi1 / ATCC BAA-1182).